Consider the following 462-residue polypeptide: Protein MOS2 (462 aa).

The span at Met-1–Lys-10 shows a compositional bias: low complexity. The segment at Met-1–Lys-32 is disordered. One can recognise a G-patch domain in the interval Val-156–Asp-202. Residues Val-231–Ser-258 enclose the KOW 1 domain. The segment covering Asp-301–Glu-336 has biased composition (basic and acidic residues). The interval Asp-301–Lys-340 is disordered. A KOW 2 domain is found at Leu-401 to Asp-428.

Belongs to the MOS2 family.

It localises to the nucleus. Required for innate and induced resistance to pathogens such as compatible and incompatible isolates of P.syringae and P.parasitica. This chain is Protein MOS2 (MOS2), found in Arabidopsis thaliana (Mouse-ear cress).